Here is a 518-residue protein sequence, read N- to C-terminus: Sensory neuron membrane protein 1 (518 aa).

Residues 1-8 are Cytoplasmic-facing; it reads MKTAEKLG. The helical transmembrane segment at 9-29 threads the bilayer; it reads IIGTTISIFGIGFGWGVFPWL. At 30–456 the chain is on the extracellular side; that stretch reads IRMQIGRVSL…ELFRILQFLD (427 aa). N-linked (GlcNAc...) asparagine glycosylation is found at asparagine 64, asparagine 186, asparagine 225, asparagine 316, asparagine 334, and asparagine 381. 3 disulfides stabilise this stretch: cysteine 265–cysteine 330, cysteine 294–cysteine 349, and cysteine 332–cysteine 338. The chain crosses the membrane as a helical span at residues 457 to 477; sequence VIKWVITLFGAGVVSGGVGLY. The Cytoplasmic segment spans residues 478–518; sequence YKEKNSLPITPTSSATSKKIDNPTDKTTTHELGHTNFGYIN.

The protein belongs to the CD36 family.

Its subcellular location is the cell membrane. In terms of biological role, plays an olfactory role that is not restricted to pheromone sensitivity. This chain is Sensory neuron membrane protein 1, found in Pediculus humanus subsp. corporis (Body louse).